The chain runs to 175 residues: UPF0398 protein SUB1405 (175 aa).

The protein belongs to the UPF0398 family.

This chain is UPF0398 protein SUB1405, found in Streptococcus uberis (strain ATCC BAA-854 / 0140J).